The primary structure comprises 195 residues: Probable DNA-directed RNA polymerase subunit delta (195 aa).

The HTH HARE-type domain occupies 14-81; the sequence is FALVEIATAI…GNNEWALRAW (68 aa). Acidic residues-rich tracts occupy residues 120–172 and 181–195; these read DDDV…DESI and GGDD…DQEK. The interval 120-195 is disordered; it reads DDDVIDYNDD…DDLSDGDQEK (76 aa).

It belongs to the RpoE family. RNAP is composed of a core of 2 alpha, a beta and a beta' subunits. The core is associated with a delta subunit and one of several sigma factors.

Its function is as follows. Participates in both the initiation and recycling phases of transcription. In the presence of the delta subunit, RNAP displays an increased specificity of transcription, a decreased affinity for nucleic acids, and an increased efficiency of RNA synthesis because of enhanced recycling. The chain is Probable DNA-directed RNA polymerase subunit delta from Leuconostoc mesenteroides subsp. mesenteroides (strain ATCC 8293 / DSM 20343 / BCRC 11652 / CCM 1803 / JCM 6124 / NCDO 523 / NBRC 100496 / NCIMB 8023 / NCTC 12954 / NRRL B-1118 / 37Y).